The chain runs to 206 residues: Glycerol-3-phosphate acyltransferase (206 aa).

Transmembrane regions (helical) follow at residues 3-23 (LSLI…VIIG), 47-67 (VLGP…GTLA), 79-99 (HSLV…SIFL), 119-139 (PLFF…TSMV), and 152-172 (ILSF…VLIF).

The protein belongs to the PlsY family. Probably interacts with PlsX.

It localises to the cell membrane. The catalysed reaction is an acyl phosphate + sn-glycerol 3-phosphate = a 1-acyl-sn-glycero-3-phosphate + phosphate. Its pathway is lipid metabolism; phospholipid metabolism. In terms of biological role, catalyzes the transfer of an acyl group from acyl-phosphate (acyl-PO(4)) to glycerol-3-phosphate (G3P) to form lysophosphatidic acid (LPA). This enzyme utilizes acyl-phosphate as fatty acyl donor, but not acyl-CoA or acyl-ACP. This chain is Glycerol-3-phosphate acyltransferase, found in Latilactobacillus sakei subsp. sakei (strain 23K) (Lactobacillus sakei subsp. sakei).